The chain runs to 104 residues: Type VII secretion system extracellular protein B (104 aa).

It belongs to the WXG100 family. In terms of assembly, homodimer. When mixed with EsxA does not form heterodimers.

The protein localises to the secreted. Virulence factor that is important for the establishment of infection in the host. EsxB is required for EsxA synthesis as well as secretion. Mediates together with EsxA the release of S.aureus from the host cell. Also inhibits host cytokine production and thus modulates dendritic cell-mediated immunity. The polypeptide is Type VII secretion system extracellular protein B (Staphylococcus aureus (strain Mu50 / ATCC 700699)).